Consider the following 256-residue polypeptide: MQPAKEVTKASDGSLLGDLGHTPLSKKEGIKWQRPRLSRQALMRCCLVKWILSSTAPQGSDSSDSELELSTVRHQPEGLDQLQAQTKFTKKELQSLYRGFKNECPTGLVDEDTFKLIYAQFFPQGDATTYAHFLFNAFDADGNGAIHFEDFVVGLSILLRGTVHEKLKWAFNLYDINKDGYITKEEMLAIMKSIYDMMGRHTYPILREDAPAEHVERFFEKMDRNQDGVVTIEEFLEACQKDENIMSSMQLFENVI.

A disordered region spans residues 1–20 (MQPAKEVTKASDGSLLGDLG). S14 is subject to Phosphoserine. A Glycyl lysine isopeptide (Lys-Gly) (interchain with G-Cter in SUMO1) cross-link involves residue K26. 2 S-palmitoyl cysteine lipidation sites follow: C45 and C46. S60 carries the post-translational modification Phosphoserine. Phosphoserine; by CK1 is present on S63. One can recognise an EF-hand 1; degenerate domain in the interval 67–123 (LELSTVRHQPEGLDQLQAQTKFTKKELQSLYRGFKNECPTGLVDEDTFKLIYAQFFP). K90 participates in a covalent cross-link: Glycyl lysine isopeptide (Lys-Gly) (interchain with G-Cter in SUMO1). EF-hand domains follow at residues 126-161 (DATTYAHFLFNAFDADGNGAIHFEDFVVGLSILLRG), 162-197 (TVHEKLKWAFNLYDINKDGYITKEEMLAIMKSIYDM), and 210-245 (APAEHVERFFEKMDRNQDGVVTIEEFLEACQKDENI). D175, N177, D179, Y181, E186, D223, N225, D227, and E234 together coordinate Ca(2+). The tract at residues 243 to 256 (ENIMSSMQLFENVI) is interaction with KCND2.

Belongs to the recoverin family. In terms of assembly, binds to DNA as a homomultimer. Dimerization is induced by binding to calcium. Interacts with the C-terminus of PSEN1 and PSEN2 and with PSEN2 CTF subunit. Associates with KCN1. Component of heteromultimeric potassium channels. Identified in potassium channel complexes containing KCND1, KCND2, KCND3, KCNIP1, KCNIP2, KCNIP3, KCNIP4, DPP6 and DPP10. Interacts with KCND2 and KCND3. Post-translationally, palmitoylated. Palmitoylation enhances association with the plasma membrane. In terms of processing, proteolytically cleaved by caspase-3. Phosphorylation at Ser-63 inhibits cleavage by CASP3. In terms of tissue distribution, highly expressed in brain. Widely expressed at lower levels. Expression levels are elevated in brain cortex regions affected by Alzheimer disease.

Its subcellular location is the cytoplasm. The protein localises to the cell membrane. It localises to the endoplasmic reticulum. The protein resides in the golgi apparatus. It is found in the nucleus. In terms of biological role, calcium-dependent transcriptional repressor that binds to the DRE element of genes including PDYN and FOS. Affinity for DNA is reduced upon binding to calcium and enhanced by binding to magnesium. Seems to be involved in nociception. Its function is as follows. Regulatory subunit of Kv4/D (Shal)-type voltage-gated rapidly inactivating A-type potassium channels, such as KCND2/Kv4.2 and KCND3/Kv4.3. Modulates channel expression at the cell membrane, gating characteristics, inactivation kinetics and rate of recovery from inactivation in a calcium-dependent and isoform-specific manner. Functionally, may play a role in the regulation of PSEN2 proteolytic processing and apoptosis. Together with PSEN2 involved in modulation of amyloid-beta formation. The protein is Calsenilin (KCNIP3) of Homo sapiens (Human).